The primary structure comprises 420 residues: Tyrosine--tRNA ligase (420 aa).

An L-tyrosine-binding site is contributed by tyrosine 33. The short motif at 38 to 47 (PTADSLHVGH) is the 'HIGH' region element. L-tyrosine contacts are provided by tyrosine 167 and glutamine 171. The short motif at 227 to 231 (KFGKT) is the 'KMSKS' region element. ATP is bound at residue lysine 230. The region spanning 353-419 (LTVADLLVKV…GKRNYALVKV (67 aa)) is the S4 RNA-binding domain.

The protein belongs to the class-I aminoacyl-tRNA synthetase family. TyrS type 1 subfamily. Homodimer.

It localises to the cytoplasm. The catalysed reaction is tRNA(Tyr) + L-tyrosine + ATP = L-tyrosyl-tRNA(Tyr) + AMP + diphosphate + H(+). In terms of biological role, catalyzes the attachment of tyrosine to tRNA(Tyr) in a two-step reaction: tyrosine is first activated by ATP to form Tyr-AMP and then transferred to the acceptor end of tRNA(Tyr). The protein is Tyrosine--tRNA ligase of Anaeromyxobacter dehalogenans (strain 2CP-1 / ATCC BAA-258).